A 188-amino-acid polypeptide reads, in one-letter code: uncharacterized protein (188 aa).

Over residues Met-1–Glu-15 the composition is skewed to basic and acidic residues. Residues Met-1–Val-21 are disordered.

This is an uncharacterized protein from Saccharolobus islandicus (Sulfolobus islandicus).